Here is a 507-residue protein sequence, read N- to C-terminus: uncharacterized protein (507 aa).

The next 12 helical transmembrane spans lie at 11 to 31, 97 to 117, 125 to 145, 149 to 169, 187 to 207, 209 to 229, 283 to 303, 326 to 346, 354 to 374, 388 to 408, 423 to 443, and 452 to 472; these read ILCF…IFPI, AWIA…YGHL, PVSF…GFAP, VFAV…IVFY, FFNW…CGYW, SAAI…LWLP, LFSS…WFST, FVQA…DLFI, LHQV…ALMI, LAII…WDAC, IGIG…PQMA, and IPYI…CFFL.

Belongs to the major facilitator superfamily.

The protein localises to the membrane. This is an uncharacterized protein from Caenorhabditis elegans.